Reading from the N-terminus, the 171-residue chain is Calcium channel flower homolog (171 aa).

Residues 1 to 31 (MSGSVAAGAAAGPVPPAQEEGMTWWYRWLCR) lie on the Cytoplasmic side of the membrane. Residues 32–52 (LAGVLGAVSCAISGLFNCVTI) traverse the membrane as a helical segment. Topologically, residues 53–56 (HPLN) are extracellular. Residues 57 to 77 (IAAGVWMIMNAFILLLCEAPF) form a helical membrane-spanning segment. The Cytoplasmic segment spans residues 78–101 (CCQFVEFANTVAEKVDRLRSWQKA). Residues 102-122 (VFYCGMAIVPIVMSLTLTTLL) form a helical membrane-spanning segment. Over 123–124 (GN) the chain is Extracellular. Residues 125-141 (AIAFATGVLYGLSALGK) traverse the membrane as a helical segment. The Cytoplasmic segment spans residues 142-171 (KGDAISYARIQQQRQQADEEKLAETFEGEL).

The protein belongs to the calcium channel flower family. In terms of assembly, interacts with adaptor protein complex 2 (AP-2). Expressed in calyces in the brain (at protein level). Detected in cultured hippocampal neurons (at protein level).

Its subcellular location is the cell membrane. The protein resides in the cytoplasmic vesicle. The protein localises to the secretory vesicle. It is found in the synaptic vesicle. It localises to the golgi apparatus. Its subcellular location is the vesicle. Its function is as follows. Transmembrane protein which mediates synaptic endocytosis and fitness-based cell culling. In response to different stimulus strengths, controls two major modes of synaptic vesicle (SV) retrieval in hippocampal neurons; Clathrin-mediated endocytosis (CME) in response to mild stimulation and activity-dependent bulk endocytosis (ADBE) in response to strong stimulation. In cytotoxic T-lymphoocytes (CTLs) facilitates calcium-dependent endocytosis of cytotoxic granules (CGs) at the immuno synapse. Different isoforms work as fitness fingerprints in 'loser' and 'winner' cells and thereby mediate win/lose decisions as part of the cell competition process. The sequence is that of Calcium channel flower homolog (Cacfd1) from Rattus norvegicus (Rat).